We begin with the raw amino-acid sequence, 200 residues long: Protein GrpE (200 aa).

Over residues 1–11 the composition is skewed to polar residues; sequence MSNQTNKAQDN. The disordered stretch occupies residues 1-29; sequence MSNQTNKAQDNQVEEIVEGELLNENGTEA.

Belongs to the GrpE family. As to quaternary structure, homodimer.

The protein resides in the cytoplasm. Participates actively in the response to hyperosmotic and heat shock by preventing the aggregation of stress-denatured proteins, in association with DnaK and GrpE. It is the nucleotide exchange factor for DnaK and may function as a thermosensor. Unfolded proteins bind initially to DnaJ; upon interaction with the DnaJ-bound protein, DnaK hydrolyzes its bound ATP, resulting in the formation of a stable complex. GrpE releases ADP from DnaK; ATP binding to DnaK triggers the release of the substrate protein, thus completing the reaction cycle. Several rounds of ATP-dependent interactions between DnaJ, DnaK and GrpE are required for fully efficient folding. This is Protein GrpE from Shewanella halifaxensis (strain HAW-EB4).